We begin with the raw amino-acid sequence, 250 residues long: MINTGRSRNSVLLAHRFLSTGGFWRGGTNGTMSRTINNVNPFKLKFIPKTVPAAADSVSPDSQRPGKKPFKFIVSNQSKSSKASKSPKWSSYAFPSRETIKSHEEAIKKQNKAIDEQIAAAVSKNDCSCTEPPKKRKRKLRPRKALITLSPKAIKHLRALLAQPEPKLIRVSARNRGCSGLTYDLQYITEPGKFDEVVEQDGVKIVIDSKALFSIIGSEMDWIDDKLASKFVFKNPNSKGTCGCGESFMV.

Residues 54 to 89 (AADSVSPDSQRPGKKPFKFIVSNQSKSSKASKSPKW) form a disordered region. Positions 75–89 (SNQSKSSKASKSPKW) are enriched in low complexity. Fe cation is bound by residues Cys-178, Cys-242, and Cys-244.

Belongs to the HesB/IscA family.

The protein resides in the mitochondrion matrix. In terms of biological role, involved in the assembly of mitochondrial and cytoplasmic iron-sulfur proteins. Probably involved in the binding of an intermediate of Fe/S cluster assembly. This chain is Iron-sulfur assembly protein 1 (ISA1), found in Saccharomyces cerevisiae (strain ATCC 204508 / S288c) (Baker's yeast).